We begin with the raw amino-acid sequence, 382 residues long: Mannitol-1-phosphate 5-dehydrogenase (382 aa).

3–14 is an NAD(+) binding site; it reads ALHFGAGNIGRG.

Belongs to the mannitol dehydrogenase family.

It carries out the reaction D-mannitol 1-phosphate + NAD(+) = beta-D-fructose 6-phosphate + NADH + H(+). The protein is Mannitol-1-phosphate 5-dehydrogenase of Mannheimia succiniciproducens (strain KCTC 0769BP / MBEL55E).